The primary structure comprises 134 residues: MTDNLGKMLNKIKNAILVKHEAVLIPYTLNNFLILRILEQEGFLDSINIVCKKKKREYKYIKVYLKYNEQTSKSFIRNICRLSKPSLRVYTNSKKIPRILNGLGIIIVSTSKGVMTSKDAYSNNIGGELLFSIW.

This sequence belongs to the universal ribosomal protein uS8 family. In terms of assembly, part of the 30S ribosomal subunit.

The protein resides in the plastid. Its subcellular location is the chloroplast. Its function is as follows. One of the primary rRNA binding proteins, it binds directly to 16S rRNA central domain where it helps coordinate assembly of the platform of the 30S subunit. This is Small ribosomal subunit protein uS8c (rps8) from Bigelowiella natans (Pedinomonas minutissima).